A 267-amino-acid polypeptide reads, in one-letter code: Phosphatidylglycerol--prolipoprotein diacylglyceryl transferase (267 aa).

The next 3 membrane-spanning stretches (helical) occupy residues 21–41 (VSLH…YWLG), 60–80 (LLFN…VFFY), and 95–115 (IWEG…AMLW). A 1,2-diacyl-sn-glycero-3-phospho-(1'-sn-glycerol) is bound at residue arginine 143. 2 helical membrane passes run 203–223 (GSVA…VEYF) and 240–260 (GQLL…VAYY).

Belongs to the Lgt family.

It is found in the cell inner membrane. The catalysed reaction is L-cysteinyl-[prolipoprotein] + a 1,2-diacyl-sn-glycero-3-phospho-(1'-sn-glycerol) = an S-1,2-diacyl-sn-glyceryl-L-cysteinyl-[prolipoprotein] + sn-glycerol 1-phosphate + H(+). It functions in the pathway protein modification; lipoprotein biosynthesis (diacylglyceryl transfer). In terms of biological role, catalyzes the transfer of the diacylglyceryl group from phosphatidylglycerol to the sulfhydryl group of the N-terminal cysteine of a prolipoprotein, the first step in the formation of mature lipoproteins. The polypeptide is Phosphatidylglycerol--prolipoprotein diacylglyceryl transferase (Glaesserella parasuis serovar 5 (strain SH0165) (Haemophilus parasuis)).